Here is a 356-residue protein sequence, read N- to C-terminus: Protein SEC13 homolog (356 aa).

WD repeat units follow at residues 11 to 50 (EHED…KALA), 54 to 95 (GHQG…DWTK), 101 to 142 (NHDS…GVWD), 149 to 205 (AHTI…WVEE), 210 to 253 (AHSD…SEWT), and 259 to 298 (TFDD…QWIR). Residues 307–356 (IQSKQPSHLPHSHSQQQQALQQHQQQAPSHPGPSSDSEHSSNLSNSQLSN) are disordered. The segment covering 308 to 356 (QSKQPSHLPHSHSQQQQALQQHQQQAPSHPGPSSDSEHSSNLSNSQLSN) has biased composition (low complexity).

It belongs to the WD repeat SEC13 family. As to quaternary structure, probable component of the nuclear pore complex (NPC). Component of the GATOR complex consisting of mio, Nup44A/Seh1, Im11, Nplr3, Nplr2, Wdr24, Wdr59 and Sec13. Within the GATOR complex, probable component of the GATOR2 subcomplex which is likely composed of mio, Nup44A/Seh1, Wdr24, Wdr59 and Sec13. Interacts with msk. Interacts (preferentially when phosphorylated) with Mad. The GATOR2 complex associates with unmet in the absence of S-adenosyl-L-methionine; the mio-Wdr24-Nup44A subcomplex is essential and sufficient for this interaction while Wdr59 and Sec13 are dispensable. This association acts as a nutrient sensor to inhibit mTORC1 signaling in the absence of methionine. Salivary glands.

Its subcellular location is the nucleus envelope. The protein resides in the nucleus. The protein localises to the nucleoplasm. It localises to the cytoplasm. It is found in the cytoskeleton. Its subcellular location is the microtubule organizing center. The protein resides in the centrosome. The protein localises to the nuclear pore complex. It localises to the cytoplasmic vesicle. It is found in the COPII-coated vesicle membrane. Its subcellular location is the endoplasmic reticulum membrane. The protein resides in the lysosome membrane. In terms of biological role, functions as a component of the nuclear pore complex (NPC) and the COPII coat. At the endoplasmic reticulum, SEC13 is involved in the biogenesis of COPII-coated vesicles. Recruited to transcriptionally active chromatin at the time of transcription initiation by RNA polymerase II. Required for proper expression of ecdysone-responsive genes such as Eip74EF and Eip75B during larval development. Required for reactivation of transcription after heat shock. Required for nuclear import of phosphorylated Mad via importin msk. Has no role in classical nuclear localization signal (cNLS)-dependent nuclear import via importin-beta. Its function is as follows. A component of the GATOR subcomplex GATOR2 which functions as an activator of the amino acid-sensing branch of the mTORC1 signaling pathway. The two GATOR subcomplexes, GATOR1 and GATOR2, regulate the mTORC1 pathway in order to mediate metabolic homeostasis, female gametogenesis and the response to amino acid limitation and complete starvation. GATOR2 activates the mTORC1 signaling pathway through the inhibition of the GATOR1 subcomplex, controlling the switch to cell proliferation and growth under nutrient replete conditions and during female oocyte development. The protein is Protein SEC13 homolog of Drosophila melanogaster (Fruit fly).